The following is a 330-amino-acid chain: Molybdate/tungstate import ATP-binding protein WtpC (330 aa).

Residues 3 to 232 (LMVEGISKDY…PASEEVAKFL (230 aa)) enclose the ABC transporter domain. 34–41 (GPSGAGKT) is an ATP binding site.

This sequence belongs to the ABC transporter superfamily. Sulfate/tungstate importer (TC 3.A.1.6) family. As to quaternary structure, the complex is composed of two ATP-binding proteins (WtpC), two transmembrane proteins (WtpB) and a solute-binding protein (WtpA).

Its subcellular location is the cell membrane. The catalysed reaction is tungstate(in) + ATP + H2O = tungstate(out) + ADP + phosphate + H(+). Part of the ABC transporter complex WtpABC involved in molybdate/tungstate import. Responsible for energy coupling to the transport system. The chain is Molybdate/tungstate import ATP-binding protein WtpC (wtpC) from Thermococcus kodakarensis (strain ATCC BAA-918 / JCM 12380 / KOD1) (Pyrococcus kodakaraensis (strain KOD1)).